Reading from the N-terminus, the 729-residue chain is Fatty acid oxidation complex subunit alpha (729 aa).

An enoyl-CoA hydratase/isomerase region spans residues 1–189; that stretch reads MLYKGDTLYL…KIGLVDGVVK (189 aa). Asp296 lines the substrate pocket. The 3-hydroxyacyl-CoA dehydrogenase stretch occupies residues 311-729; the sequence is ETPKQAAVLG…ARPVGDLKTA (419 aa). NAD(+)-binding positions include Met324, Asp343, 400–402, Lys407, and Ser429; that span reads IVE. The For 3-hydroxyacyl-CoA dehydrogenase activity role is filled by His450. Asn453 is a binding site for NAD(+). Substrate-binding residues include Asn500 and Tyr660. A disordered region spans residues 708–729; it reads RHNEPYYPPVEPARPVGDLKTA.

The protein in the N-terminal section; belongs to the enoyl-CoA hydratase/isomerase family. This sequence in the C-terminal section; belongs to the 3-hydroxyacyl-CoA dehydrogenase family. As to quaternary structure, heterotetramer of two alpha chains (FadB) and two beta chains (FadA).

The catalysed reaction is a (3S)-3-hydroxyacyl-CoA + NAD(+) = a 3-oxoacyl-CoA + NADH + H(+). The enzyme catalyses a (3S)-3-hydroxyacyl-CoA = a (2E)-enoyl-CoA + H2O. It catalyses the reaction a 4-saturated-(3S)-3-hydroxyacyl-CoA = a (3E)-enoyl-CoA + H2O. It carries out the reaction (3S)-3-hydroxybutanoyl-CoA = (3R)-3-hydroxybutanoyl-CoA. The catalysed reaction is a (3Z)-enoyl-CoA = a 4-saturated (2E)-enoyl-CoA. The enzyme catalyses a (3E)-enoyl-CoA = a 4-saturated (2E)-enoyl-CoA. It participates in lipid metabolism; fatty acid beta-oxidation. Its function is as follows. Involved in the aerobic and anaerobic degradation of long-chain fatty acids via beta-oxidation cycle. Catalyzes the formation of 3-oxoacyl-CoA from enoyl-CoA via L-3-hydroxyacyl-CoA. It can also use D-3-hydroxyacyl-CoA and cis-3-enoyl-CoA as substrate. The chain is Fatty acid oxidation complex subunit alpha from Escherichia coli O157:H7.